Consider the following 233-residue polypeptide: Large ribosomal subunit protein uL1 (233 aa).

This sequence belongs to the universal ribosomal protein uL1 family. In terms of assembly, part of the 50S ribosomal subunit.

Binds directly to 23S rRNA. The L1 stalk is quite mobile in the ribosome, and is involved in E site tRNA release. In terms of biological role, protein L1 is also a translational repressor protein, it controls the translation of the L11 operon by binding to its mRNA. This is Large ribosomal subunit protein uL1 from Marinomonas sp. (strain MWYL1).